Consider the following 449-residue polypeptide: UDP-N-acetylmuramate--L-alanine ligase (449 aa).

Gly110–Thr116 contributes to the ATP binding site.

The protein belongs to the MurCDEF family.

The protein localises to the cytoplasm. The enzyme catalyses UDP-N-acetyl-alpha-D-muramate + L-alanine + ATP = UDP-N-acetyl-alpha-D-muramoyl-L-alanine + ADP + phosphate + H(+). It functions in the pathway cell wall biogenesis; peptidoglycan biosynthesis. In terms of biological role, cell wall formation. The sequence is that of UDP-N-acetylmuramate--L-alanine ligase from Desulfitobacterium hafniense (strain Y51).